Reading from the N-terminus, the 136-residue chain is Large ribosomal subunit protein eL27 (136 aa).

Positions 5-40 constitute a KOW domain; the sequence is MKPGKVVMVLAGRYAGRKAVIVKNIDDGTADRPYSH.

This sequence belongs to the eukaryotic ribosomal protein eL27 family. As to quaternary structure, component of the large ribosomal subunit.

The protein resides in the cytoplasm. It localises to the cytosol. It is found in the rough endoplasmic reticulum. Functionally, component of the large ribosomal subunit. This chain is Large ribosomal subunit protein eL27 (rpl27), found in Ictalurus punctatus (Channel catfish).